The following is a 953-amino-acid chain: 26S proteasome non-ATPase regulatory subunit 1 (953 aa).

M1 is subject to N-acetylmethionine; partial. Residue T273 is modified to Phosphothreonine. Residues 279–318 (PGSTNTGTVPGSEKDSDSMETEEKTGSAFVGKTPEASPEP) form a disordered region. S290 is subject to Phosphoserine. Over residues 290–303 (SEKDSDSMETEEKT) the composition is skewed to basic and acidic residues. Position 310 is an N6-acetyllysine (K310). Position 311 is a phosphothreonine (T311). S315 carries the phosphoserine modification. 10 PC repeats span residues 403-436 (TATA…PGSA), 441-474 (GGLY…DIVR), 476-510 (GGSL…VTGE), 511-545 (AAGL…EKIL), 547-580 (GLAV…ILRR), 581-616 (SGMY…DVRR), 617-649 (AAVE…PHVR), 651-685 (GAAM…YVRQ), 686-726 (GALI…DVMA), and 729-761 (GAIL…PSVV). K720 is subject to N6-acetyllysine. T830 carries the post-translational modification Phosphothreonine. Position 834 is a phosphoserine (S834). Disordered stretches follow at residues 839 to 881 (AKKK…LDNP) and 930 to 953 (AHGP…YIDD). Composition is skewed to basic and acidic residues over residues 842–852 (KEKEKEKKEEE) and 859–872 (AEKK…KEPE). The span at 936–953 (EEEEQEPEPPEPFEYIDD) shows a compositional bias: acidic residues.

The protein belongs to the proteasome subunit S1 family. Component of the 19S proteasome regulatory particle complex. The 26S proteasome consists of a 20S core particle (CP) and two 19S regulatory subunits (RP). The regulatory particle is made of a lid composed of 9 subunits, a base containing 6 ATPases and few additional components including PSMD1. Interacts with ADRM1. Interacts with ZFAND1.

Functionally, component of the 26S proteasome, a multiprotein complex involved in the ATP-dependent degradation of ubiquitinated proteins. This complex plays a key role in the maintenance of protein homeostasis by removing misfolded or damaged proteins, which could impair cellular functions, and by removing proteins whose functions are no longer required. Therefore, the proteasome participates in numerous cellular processes, including cell cycle progression, apoptosis, or DNA damage repair. The protein is 26S proteasome non-ATPase regulatory subunit 1 (PSMD1) of Pongo abelii (Sumatran orangutan).